A 275-amino-acid chain; its full sequence is Phosphonoacetaldehyde hydrolase (275 aa).

Asp15 functions as the Nucleophile in the catalytic mechanism. The Mg(2+) site is built by Asp15 and Ala17. Residue Lys56 is the Schiff-base intermediate with substrate of the active site. Asp189 contacts Mg(2+).

This sequence belongs to the HAD-like hydrolase superfamily. PhnX family. As to quaternary structure, homodimer. The cofactor is Mg(2+).

It catalyses the reaction phosphonoacetaldehyde + H2O = acetaldehyde + phosphate + H(+). Functionally, involved in phosphonate degradation. The sequence is that of Phosphonoacetaldehyde hydrolase from Pseudomonas putida (strain W619).